Here is an 80-residue protein sequence, read N- to C-terminus: MKVSCEDVNGPRSSLGRAWNHVSWLYYQYLLVTALYMLEPWERTVFNSMLVSIVGMALYTGYIFMPQHILAILHYFEIVQ.

The Cytoplasmic portion of the chain corresponds to 1–21 (MKVSCEDVNGPRSSLGRAWNH). Residues 22–38 (VSWLYYQYLLVTALYML) traverse the membrane as a helical segment. Over 39–43 (EPWER) the chain is Lumenal. The chain crosses the membrane as a helical span at residues 44–66 (TVFNSMLVSIVGMALYTGYIFMP). At 67-80 (QHILAILHYFEIVQ) the chain is on the cytoplasmic side.

The protein belongs to the SPTSS family. SPTSSA subfamily. Component of the serine palmitoyltransferase (SPT) complex, which is composed of SPTLC1, SPTLC2 or SPTLC3 and SPTSSA or SPTSSB. The heterodimer consisting of SPTLC1 and SPTLC2/SPTLC3 forms the catalytic core of the enzyme, while SPTSSA or SPTSSB subunits determine substrate specificity. SPT also interacts with ORMDL proteins, especially ORMDL3, which negatively regulate SPT activity in the presence of ceramides.

It is found in the endoplasmic reticulum membrane. The protein operates within lipid metabolism; sphingolipid metabolism. Its function is as follows. Component of the serine palmitoyltransferase multisubunit enzyme (SPT) that catalyzes the initial and rate-limiting step in sphingolipid biosynthesis by condensing L-serine and activated acyl-CoA (most commonly palmitoyl-CoA) to form long-chain bases. The SPT complex is composed of SPTLC1, SPTLC2 or SPTLC3 and SPTSSA or SPTSSB. Within this complex, the heterodimer consisting of SPTLC1 and SPTLC2/SPTLC3 forms the catalytic core. Within the SPT complex, SPTSSA stimulates the catalytic activity and plays a role in substrate specificity, which depends upon the overall complex composition. The SPTLC1-SPTLC2-SPTSSA complex shows a strong preference for C16-CoA substrate, while the SPTLC1-SPTLC3-SPTSSA isozyme uses both C14-CoA and C16-CoA as substrates, with a slight preference for C14-CoA. Independently of its action as a SPT component, may be involved in MBOAT7 localization to mitochondria-associated membranes, a membrane bridge between the endoplasmic reticulum and mitochondria, may hence affect MBOAT7-catalyzed incorporation of arachidonic acid into phosphatidylinositol. This is Serine palmitoyltransferase small subunit A-B (sptssa-b) from Xenopus laevis (African clawed frog).